We begin with the raw amino-acid sequence, 858 residues long: Bifunctional uridylyltransferase/uridylyl-removing enzyme (858 aa).

A uridylyltransferase region spans residues 1–324 (MSAHAAPSPE…PATSGITRVL (324 aa)). A uridylyl-removing region spans residues 325–681 (SADRFVEKQG…ARPSPIGDAL (357 aa)). Residues 443 to 565 (VDQHILMVLR…VGNERYLTAL (123 aa)) enclose the HD domain. ACT domains follow at residues 682-763 (QVLV…PSKG) and 790-858 (ILSV…AIAV).

This sequence belongs to the GlnD family. It depends on Mg(2+) as a cofactor.

It catalyses the reaction [protein-PII]-L-tyrosine + UTP = [protein-PII]-uridylyl-L-tyrosine + diphosphate. The enzyme catalyses [protein-PII]-uridylyl-L-tyrosine + H2O = [protein-PII]-L-tyrosine + UMP + H(+). Uridylyltransferase (UTase) activity is inhibited by glutamine, while glutamine activates uridylyl-removing (UR) activity. In terms of biological role, modifies, by uridylylation and deuridylylation, the PII regulatory proteins (GlnB and homologs), in response to the nitrogen status of the cell that GlnD senses through the glutamine level. Under low glutamine levels, catalyzes the conversion of the PII proteins and UTP to PII-UMP and PPi, while under higher glutamine levels, GlnD hydrolyzes PII-UMP to PII and UMP (deuridylylation). Thus, controls uridylylation state and activity of the PII proteins, and plays an important role in the regulation of nitrogen assimilation and metabolism. The polypeptide is Bifunctional uridylyltransferase/uridylyl-removing enzyme (Burkholderia orbicola (strain AU 1054)).